Consider the following 562-residue polypeptide: Formate--tetrahydrofolate ligase (562 aa).

An ATP-binding site is contributed by Thr-71–Ser-78.

This sequence belongs to the formate--tetrahydrofolate ligase family.

It carries out the reaction (6S)-5,6,7,8-tetrahydrofolate + formate + ATP = (6R)-10-formyltetrahydrofolate + ADP + phosphate. It participates in one-carbon metabolism; tetrahydrofolate interconversion. This is Formate--tetrahydrofolate ligase from Bacillus cereus (strain AH187).